A 173-amino-acid polypeptide reads, in one-letter code: Small ribosomal subunit protein uS5 (173 aa).

The 64-residue stretch at 17–80 (WQERVIQIRR…ADGKKQLIEV (64 aa)) folds into the S5 DRBM domain.

This sequence belongs to the universal ribosomal protein uS5 family. In terms of assembly, part of the 30S ribosomal subunit. Contacts proteins S4 and S8.

In terms of biological role, with S4 and S12 plays an important role in translational accuracy. Functionally, located at the back of the 30S subunit body where it stabilizes the conformation of the head with respect to the body. The polypeptide is Small ribosomal subunit protein uS5 (Gloeothece citriformis (strain PCC 7424) (Cyanothece sp. (strain PCC 7424))).